A 342-amino-acid chain; its full sequence is Platelet-activating factor receptor (342 aa).

At 1-16 the chain is on the extracellular side; the sequence is MELNSSSRVDSEFRYT. N-linked (GlcNAc...) asparagine glycosylation is present at asparagine 4. A helical transmembrane segment spans residues 17-38; that stretch reads LFPIVYSIIFVLGIIANGYVLW. Residues 39–54 are Cytoplasmic-facing; it reads VFARLYPSKKLNEIKI. A helical transmembrane segment spans residues 55–74; that stretch reads FMVNLTVADLLFLITLPLWI. The Extracellular portion of the chain corresponds to 75–91; that stretch reads VYYSNQGNWFLPKFLCN. Cysteine 90 and cysteine 173 are oxidised to a cystine. A helical membrane pass occupies residues 92-113; it reads LAGCLFFINTYCSVAFLGVITY. Over 114-133 the chain is Cytoplasmic; the sequence is NRFQAVKYPIKTAQATTRKR. A helical transmembrane segment spans residues 134-155; it reads GIALSLVIWVAIVAAASYFLVM. Residues 156–184 are Extracellular-facing; the sequence is DSTNVVSNKAGSGNITRCFEHYEKGSKPV. An N-linked (GlcNAc...) asparagine glycan is attached at asparagine 169. Residues 185 to 205 form a helical membrane-spanning segment; the sequence is LIIHICIVLGFFIVFLLILFC. The Cytoplasmic portion of the chain corresponds to 206-233; that stretch reads NLVIIHTLLRQPVKQQRNAEVRRRALWM. The chain crosses the membrane as a helical span at residues 234–254; sequence VCTVLAVFVICFVPHHMVQLP. Topologically, residues 255–276 are extracellular; that stretch reads WTLAELGMWPSSNHQAINDAHQ. A helical membrane pass occupies residues 277–296; sequence VTLCLLSTNCVLDPVIYCFL. At 297–342 the chain is on the cytoplasmic side; the sequence is TKKFRKHLSEKLNIMRSSQKCSRVTTDTGTEMAIPINHTPVNPIKN.

Belongs to the G-protein coupled receptor 1 family. Interacts with ARRB1.

The protein localises to the cell membrane. Functionally, receptor for platelet activating factor, a chemotactic phospholipid mediator that possesses potent inflammatory, smooth-muscle contractile and hypotensive activity. Seems to mediate its action via a G protein that activates a phosphatidylinositol-calcium second messenger system. This chain is Platelet-activating factor receptor (PTAFR), found in Cavia porcellus (Guinea pig).